Consider the following 447-residue polypeptide: Cysteine--tRNA ligase (447 aa).

Cysteine 28 serves as a coordination point for Zn(2+). A 'HIGH' region motif is present at residues 30-40 (PTVYNYIHIGN). The Zn(2+) site is built by cysteine 211, histidine 236, and glutamate 240. Positions 268 to 272 (KMSKS) match the 'KMSKS' region motif. Position 271 (lysine 271) interacts with ATP.

This sequence belongs to the class-I aminoacyl-tRNA synthetase family. In terms of assembly, monomer. Requires Zn(2+) as cofactor.

The protein localises to the cytoplasm. It catalyses the reaction tRNA(Cys) + L-cysteine + ATP = L-cysteinyl-tRNA(Cys) + AMP + diphosphate. In Streptococcus agalactiae serotype III (strain NEM316), this protein is Cysteine--tRNA ligase.